We begin with the raw amino-acid sequence, 468 residues long: Probable Xaa-Pro aminopeptidase pepP (468 aa).

Mn(2+) contacts are provided by D264, D275, E398, and E438.

Belongs to the peptidase M24B family. It depends on Mn(2+) as a cofactor.

It catalyses the reaction Release of any N-terminal amino acid, including proline, that is linked to proline, even from a dipeptide or tripeptide.. Its function is as follows. Catalyzes the removal of a penultimate prolyl residue from the N-termini of peptides. This Talaromyces stipitatus (strain ATCC 10500 / CBS 375.48 / QM 6759 / NRRL 1006) (Penicillium stipitatum) protein is Probable Xaa-Pro aminopeptidase pepP (pepP).